A 561-amino-acid polypeptide reads, in one-letter code: Excitatory amino acid transporter 4 (561 aa).

Over Met1–Arg52 the chain is Cytoplasmic. Ser2 is modified (phosphoserine). The next 3 membrane-spanning stretches (helical) occupy residues Asn53 to Leu73, Met96 to Leu116, and Val130 to Ile150. N-linked (GlcNAc...) asparagine glycosylation is found at Asn213, Asn229, and Asn236. A run of 3 helical transmembrane segments spans residues Ser259–Met282, Phe292–Ile319, and Leu341–Val362. An intramembrane region (discontinuously helical) is located at residues Phe368–Leu398. An L-aspartate-binding site is contributed by Ser385–Ser387. Residues Ile408–Phe434 form a helical membrane-spanning segment. Na(+)-binding residues include Gly416, Thr418, and Asn420. L-aspartate contacts are provided by residues Thr424, Ile465–Gly469, Asp498, and Asn505. The segment at residues Ile448–Gly481 is an intramembrane region (discontinuously helical). The chain crosses the membrane as a helical span at residues Trp495–Ile516. Na(+) contacts are provided by Asn505 and Asp509.

Belongs to the dicarboxylate/amino acid:cation symporter (DAACS) (TC 2.A.23) family. SLC1A6 subfamily. As to quaternary structure, homotrimer. In terms of tissue distribution, brain specific.

The protein resides in the cell membrane. It carries out the reaction K(+)(in) + L-glutamate(out) + 3 Na(+)(out) + H(+)(out) = K(+)(out) + L-glutamate(in) + 3 Na(+)(in) + H(+)(in). The catalysed reaction is K(+)(in) + L-aspartate(out) + 3 Na(+)(out) + H(+)(out) = K(+)(out) + L-aspartate(in) + 3 Na(+)(in) + H(+)(in). The enzyme catalyses D-aspartate(out) + K(+)(in) + 3 Na(+)(out) + H(+)(out) = D-aspartate(in) + K(+)(out) + 3 Na(+)(in) + H(+)(in). Its function is as follows. Sodium-dependent, high-affinity amino acid transporter that mediates the uptake of L-glutamate and also L-aspartate and D-aspartate. Functions as a symporter that transports one amino acid molecule together with two or three Na(+) ions and one proton, in parallel with the counter-transport of one K(+) ion. Mediates Cl(-) flux that is not coupled to amino acid transport; this avoids the accumulation of negative charges due to aspartate and Na(+) symport. Plays a redundant role in the rapid removal of released glutamate from the synaptic cleft, which is essential for terminating the postsynaptic action of glutamate. This Mus musculus (Mouse) protein is Excitatory amino acid transporter 4 (Slc1a6).